We begin with the raw amino-acid sequence, 230 residues long: Small ribosomal subunit protein uS7m (230 aa).

The protein belongs to the universal ribosomal protein uS7 family. As to quaternary structure, part of the small ribosomal subunit.

It localises to the mitochondrion. One of the primary rRNA binding proteins, it binds directly to 18S rRNA where it nucleates assembly of the head domain of the small subunit. The sequence is that of Small ribosomal subunit protein uS7m (RPS7) from Marchantia polymorpha (Common liverwort).